The chain runs to 442 residues: C4-dicarboxylate transport protein (442 aa).

8 helical membrane-spanning segments follow: residues 10–30 (VQVL…PSLG), 40–60 (FIKL…VSGI), 77–97 (LLYF…IVNI), 144–164 (FTQG…FALL), 183–203 (VIFV…FGAM), 221–241 (LMIT…GLIA), 331–351 (LLGV…SGFI), and 354–374 (AATL…ILGI). The tract at residues 418-442 (LPTIEPDVHSEERGEGRELDSLRPA) is disordered. Residues 423-442 (PDVHSEERGEGRELDSLRPA) show a composition bias toward basic and acidic residues.

It belongs to the dicarboxylate/amino acid:cation symporter (DAACS) (TC 2.A.23) family.

It is found in the cell membrane. In terms of biological role, responsible for the transport of dicarboxylates such as succinate, fumarate, and malate across the membrane. The protein is C4-dicarboxylate transport protein of Deinococcus deserti (strain DSM 17065 / CIP 109153 / LMG 22923 / VCD115).